Here is a 173-residue protein sequence, read N- to C-terminus: NADH-ubiquinone oxidoreductase chain 6 (173 aa).

Transmembrane regions (helical) follow at residues 1-21 (MTYF…AVAS), 27-47 (YGVV…VSLG), 48-68 (VSFV…VVFV), 87-107 (VVGY…LGGL), and 139-159 (CGVG…FVVL).

This sequence belongs to the complex I subunit 6 family. As to quaternary structure, core subunit of respiratory chain NADH dehydrogenase (Complex I) which is composed of 45 different subunits.

Its subcellular location is the mitochondrion inner membrane. The catalysed reaction is a ubiquinone + NADH + 5 H(+)(in) = a ubiquinol + NAD(+) + 4 H(+)(out). Its function is as follows. Core subunit of the mitochondrial membrane respiratory chain NADH dehydrogenase (Complex I) which catalyzes electron transfer from NADH through the respiratory chain, using ubiquinone as an electron acceptor. Essential for the catalytic activity and assembly of complex I. This is NADH-ubiquinone oxidoreductase chain 6 (MT-ND6) from Gallus gallus (Chicken).